Reading from the N-terminus, the 109-residue chain is Spermidine export protein MdtI (109 aa).

The next 4 membrane-spanning stretches (helical) occupy residues 6–26, 36–56, 64–84, and 88–108; these read WIHA…NVFL, WFGL…SQAV, AYAL…WVLF, and LNRK…MIKL.

This sequence belongs to the drug/metabolite transporter (DMT) superfamily. Small multidrug resistance (SMR) (TC 2.A.7.1) family. MdtI subfamily. In terms of assembly, forms a complex with MdtJ.

The protein resides in the cell inner membrane. Catalyzes the excretion of spermidine. This is Spermidine export protein MdtI from Enterobacter sp. (strain 638).